A 134-amino-acid chain; its full sequence is Ribonuclease VapC1 (134 aa).

The 130-residue stretch at 3 to 132 (YMLDTNIIIY…RITDLQWQDW (130 aa)) folds into the PINc domain. Positions 6 and 99 each coordinate Mg(2+).

The protein belongs to the PINc/VapC protein family. Forms a complex with VapB1. It depends on Mg(2+) as a cofactor.

In terms of biological role, toxic component of a type II toxin-antitoxin (TA) system. Upon expression in E.coli inhibits growth in liquid culture. Its toxic effect is neutralized by coexpression with antitoxin VapB1. Degrades RNA but not ss- or ds-DNA in vitro, degradation is inhibited by VapB1 antitoxin. The sequence is that of Ribonuclease VapC1 from Haemophilus influenzae (strain R2866).